Here is a 380-residue protein sequence, read N- to C-terminus: Cyclohex-1-ene-1-carbonyl-CoA dehydrogenase (380 aa).

Catalysis depends on Asp-91, which acts as the Proton acceptor. FAD contacts are provided by Leu-122, Ala-124, Thr-125, Ser-131, and Thr-157. Position 131 (Ser-131) interacts with cyclohex-1-ene-1-carbonyl-CoA. Ser-131 serves as a coordination point for cyclohexa-1,5-diene-1-carbonyl-CoA. Cyclohex-1-ene-1-carbonyl-CoA contacts are provided by Lys-178, Arg-242, and Thr-363. The cyclohexa-1,5-diene-1-carbonyl-CoA site is built by Lys-178, Arg-242, and Thr-363. The FAD site is built by Thr-365 and Gln-367. Arg-375 provides a ligand contact to cyclohex-1-ene-1-carbonyl-CoA. Cyclohexa-1,5-diene-1-carbonyl-CoA is bound at residue Arg-375.

This sequence belongs to the acyl-CoA dehydrogenase family. As to quaternary structure, homotetramer. FAD is required as a cofactor.

It catalyses the reaction cyclohex-1-ene-1-carbonyl-CoA + oxidized [electron-transfer flavoprotein] + H(+) = cyclohexa-1,5-diene-1-carbonyl-CoA + reduced [electron-transfer flavoprotein]. In terms of biological role, acyl-CoA dehydrogenase involved in the anaerobic degradation of cyclohexane carboxylic acid (CHC). Catalyzes the 1,4-dehydrogenation at C3 and C6 of cyclohex-1-ene-1-carbonyl-CoA (CHeneCoA or Ch1CoA) to cyclohexa-1,5-diene-1-carbonyl-CoA (CHdieneCoA or Ch1,5CoA). Also able to catalyze, at a lower rate, the dehydrogenation at C3 and C4 of CHdieneCoA to benzoyl-CoA. This Geobacter metallireducens (strain ATCC 53774 / DSM 7210 / GS-15) protein is Cyclohex-1-ene-1-carbonyl-CoA dehydrogenase.